Consider the following 618-residue polypeptide: Uptake hydrogenase large subunit (618 aa).

Ni(2+) contacts are provided by Cys-75, Cys-78, Cys-597, and Cys-600.

Belongs to the [NiFe]/[NiFeSe] hydrogenase large subunit family. As to quaternary structure, heterodimer of a large and a small subunit. Requires Ni(2+) as cofactor.

It is found in the cell membrane. It catalyses the reaction H2 + A = AH2. Functionally, this enzyme recycles the H(2) produced by nitrogenase to increase the production of ATP and to protect nitrogenase against inhibition or damage by O(2) under carbon- or phosphate-limited conditions. In Rubrivivax gelatinosus (Rhodocyclus gelatinosus), this protein is Uptake hydrogenase large subunit (hupB).